Here is a 401-residue protein sequence, read N- to C-terminus: Phosphoglycerate kinase (401 aa).

Residues 26 to 28 (DLN), Arg-41, 64 to 67 (HLGR), Arg-123, and Arg-156 contribute to the substrate site. ATP contacts are provided by residues Lys-207, Gly-298, Glu-329, and 355-358 (GGDS).

This sequence belongs to the phosphoglycerate kinase family. In terms of assembly, monomer.

It localises to the cytoplasm. The enzyme catalyses (2R)-3-phosphoglycerate + ATP = (2R)-3-phospho-glyceroyl phosphate + ADP. It participates in carbohydrate degradation; glycolysis; pyruvate from D-glyceraldehyde 3-phosphate: step 2/5. This is Phosphoglycerate kinase from Bdellovibrio bacteriovorus (strain ATCC 15356 / DSM 50701 / NCIMB 9529 / HD100).